Reading from the N-terminus, the 443-residue chain is tRNA-2-methylthio-N(6)-dimethylallyladenosine synthase (443 aa).

The MTTase N-terminal domain occupies 1 to 114; the sequence is MRFYIKTFGC…VTEAVKRALQ (114 aa). The [4Fe-4S] cluster site is built by Cys10, Cys46, Cys79, Cys150, Cys154, and Cys157. The Radical SAM core domain occupies 136–367; that stretch reads RSSKHHAWVT…MNLQKRINRK (232 aa). The 62-residue stretch at 370–431 folds into the TRAM domain; sequence ERYKGKTVRV…AGPLYGKVVW (62 aa).

It belongs to the methylthiotransferase family. MiaB subfamily. As to quaternary structure, monomer. [4Fe-4S] cluster serves as cofactor.

The protein localises to the cytoplasm. It catalyses the reaction N(6)-dimethylallyladenosine(37) in tRNA + (sulfur carrier)-SH + AH2 + 2 S-adenosyl-L-methionine = 2-methylsulfanyl-N(6)-dimethylallyladenosine(37) in tRNA + (sulfur carrier)-H + 5'-deoxyadenosine + L-methionine + A + S-adenosyl-L-homocysteine + 2 H(+). Functionally, catalyzes the methylthiolation of N6-(dimethylallyl)adenosine (i(6)A), leading to the formation of 2-methylthio-N6-(dimethylallyl)adenosine (ms(2)i(6)A) at position 37 in tRNAs that read codons beginning with uridine. The chain is tRNA-2-methylthio-N(6)-dimethylallyladenosine synthase from Thermotoga sp. (strain RQ2).